The chain runs to 286 residues: Mycolic acid methyltransferase MmaA1 (286 aa).

S-adenosyl-L-methionine-binding positions include 32–33 (YT), 71–73 (GCG), 93–98 (TLSRNH), and 122–123 (WE). Residue C268 is part of the active site.

It belongs to the CFA/CMAS family.

The protein operates within lipid metabolism; mycolic acid biosynthesis. In terms of biological role, involved in the conversion of a cis-olefin into a trans-olefin with concomitant introduction of an allylic methyl branch at the proximal position of the precursor to both the methoxy and ketomycolic acids. It directly affects the cis- to trans ratio and indirectly affects the keto to methoxy ratio. The protein is Mycolic acid methyltransferase MmaA1 (cmaD) of Mycobacterium bovis (strain ATCC BAA-935 / AF2122/97).